We begin with the raw amino-acid sequence, 994 residues long: Phosphoenolpyruvate carboxylase (994 aa).

The segment at 1-67 (MKAVRSDKTT…GRTREDKDHP (67 aa)) is disordered. Low complexity-rich tracts occupy residues 9–24 (TTQA…PAKA) and 34–57 (AAPQ…PKAN). Active-site residues include H204 and K646.

It belongs to the PEPCase type 1 family. It depends on Mg(2+) as a cofactor.

The enzyme catalyses oxaloacetate + phosphate = phosphoenolpyruvate + hydrogencarbonate. Functionally, forms oxaloacetate, a four-carbon dicarboxylic acid source for the tricarboxylic acid cycle. The chain is Phosphoenolpyruvate carboxylase from Paraburkholderia xenovorans (strain LB400).